The primary structure comprises 384 residues: Dual-specificity RNA methyltransferase RlmN (384 aa).

Glutamate 105 serves as the catalytic Proton acceptor. The Radical SAM core domain occupies 111-350 (EDDRATLCVS…TIVRKTRGDD (240 aa)). Cysteine 118 and cysteine 355 are disulfide-bonded. Residues cysteine 125, cysteine 129, and cysteine 132 each contribute to the [4Fe-4S] cluster site. S-adenosyl-L-methionine contacts are provided by residues 179-180 (GE), serine 211, 233-235 (SLH), and asparagine 312. Cysteine 355 functions as the S-methylcysteine intermediate in the catalytic mechanism.

The protein belongs to the radical SAM superfamily. RlmN family. The cofactor is [4Fe-4S] cluster.

It localises to the cytoplasm. It carries out the reaction adenosine(2503) in 23S rRNA + 2 reduced [2Fe-2S]-[ferredoxin] + 2 S-adenosyl-L-methionine = 2-methyladenosine(2503) in 23S rRNA + 5'-deoxyadenosine + L-methionine + 2 oxidized [2Fe-2S]-[ferredoxin] + S-adenosyl-L-homocysteine. It catalyses the reaction adenosine(37) in tRNA + 2 reduced [2Fe-2S]-[ferredoxin] + 2 S-adenosyl-L-methionine = 2-methyladenosine(37) in tRNA + 5'-deoxyadenosine + L-methionine + 2 oxidized [2Fe-2S]-[ferredoxin] + S-adenosyl-L-homocysteine. In terms of biological role, specifically methylates position 2 of adenine 2503 in 23S rRNA and position 2 of adenine 37 in tRNAs. m2A2503 modification seems to play a crucial role in the proofreading step occurring at the peptidyl transferase center and thus would serve to optimize ribosomal fidelity. The sequence is that of Dual-specificity RNA methyltransferase RlmN from Shigella boydii serotype 18 (strain CDC 3083-94 / BS512).